The following is a 354-amino-acid chain: NADH-quinone oxidoreductase subunit H (354 aa).

A run of 8 helical transmembrane segments spans residues 22–42 (ILIRAVLIVVPLLLCVAYLIL), 91–111 (YLIAPLMVLMPAVAIWAVIPF), 124–144 (LLYVMAISSVGVYGVILAGWA), 168–188 (MGFALVTVLMVSGSLNLSAIV), 203–223 (VLSWNWIPLLPMFGVYFISGV), 255–275 (LFFLAEYINMIIISTITALLF), 291–311 (IPGFFWLLIKVFLLLSVFIWI), and 326–346 (LGWKVFIPLTVGWLIIVAIWI).

The protein belongs to the complex I subunit 1 family. In terms of assembly, NDH-1 is composed of 14 different subunits. Subunits NuoA, H, J, K, L, M, N constitute the membrane sector of the complex.

The protein localises to the cell inner membrane. The catalysed reaction is a quinone + NADH + 5 H(+)(in) = a quinol + NAD(+) + 4 H(+)(out). In terms of biological role, NDH-1 shuttles electrons from NADH, via FMN and iron-sulfur (Fe-S) centers, to quinones in the respiratory chain. The immediate electron acceptor for the enzyme in this species is believed to be ubiquinone. Couples the redox reaction to proton translocation (for every two electrons transferred, four hydrogen ions are translocated across the cytoplasmic membrane), and thus conserves the redox energy in a proton gradient. This subunit may bind ubiquinone. This chain is NADH-quinone oxidoreductase subunit H, found in Cupriavidus pinatubonensis (strain JMP 134 / LMG 1197) (Cupriavidus necator (strain JMP 134)).